Consider the following 1372-residue polypeptide: MGQLTKKFGKIPVSLGIPHLLNLQVDSYVKFLQEGLAERKTDEGLEGVFRSVFPIEDFNRTASLEYVSYDIGEPKFDQAECISKGLTYEAPIRIKVRLVVYDVDDDSGNRTIRDIKEQDIYFGTLPLMTEKGTFIINGTERVIVNQLQRSPGIIFEHDSGKTHSSRKVLYSCRVIPMRGSWLDFDFDHKDILYVRIDRRRKMPATILFKAMGMTKTDILDYFYKKEFYRISADGRVFWEVQKDMFRKDSAFADIAGPDGTVFVKAGKPITKRAWRQICEAGLETIEVAADTLDGLFLADDVVNPATGEVLAEAADEVTPGVQERLREAGIDRLPILHTKGIDTSSSLRDTLVLDKTADKEAAQVEIYRRLRPSSPPTPEIAESFFDNLFRSADYYDLSPVGRYKLNQRLGLDQSLELRVLTDEDILTAIRVLLHLKDSHGPADDIDHLGNRRVRPVGELVENQYRIGLVRMERAIKERMSLQEVSTLMPHDLINPKPVAAVLKEFFGTSQLSQFMDQTNALSEVTHKRRLSALGPGGLTRERAGFEVRDVHTSHYGRICPIETPEGPNIGLIVSLTTYAKVNDYGFIETPYHVIRDTKMTGEVVYLDASREHGEVIAQANAPFDAEGKLADEYVTTRVKGDVLMSPREEVTLMDVSPSQMVSISAALIPFLEHDDANRALMGSNMQRQAVPLLQCEKPLVGTGMEGPVAQDSGACIIAEGPGIVRYADADRIIVSYENGLYPERGGVRAYDLQKFHKSNQNSCFGQKPTCHPGQIVAKGDILADGPGIEDGELALGKNLVVAFMPWCGYNFEDSILISERTVKEDTFTSVHIEEFEVVARDTKLGPEEITRDIPNVGEDMLRNLDGSGIIRIGANVKPDDILVGKITPKGETQLTPEEKLLRAIFGDKARDVKNTSLKVPPGIEGTVIEVKVFNRRSGEKDERARLIEEYELGRLDRKEQDHIRGLGDATRVKLMAVVEGKQIATTLAGKKKGEVIAEAGASVTAEMLADVPLKKLSGLFKNREVNEAVDALLESYDQQVQFISNIYESKRGKVTEGDDLPPGVIKMVKVYIAVKRKLSVGDKMAGRHGNKGVVSCILPAEDMPFFADGRPVDIVLNPLGVPSRMNIGQIMETHLGWAAKEMGRQLAEMLERNDPLKALRNEVKRAFDSPAIDSLVDSMDDEDFRASVAKLGRGIVTKTPVFDGAAEEEIWSWLVRANIDEDGKTVLYDGRTGERFHNRVTTGVMYMLKLHHLVDEKIHARSTGPYSLVTQQPLGGKAQFGGQRLGEMEVWALEAYGAAYLLQEFLTVKSDDVTGRVKMYEKIVKGDNFLEAGLPESFNVLVKELMSLGLDVTLHQEEGKKRPKRVGFMNAL.

The protein belongs to the RNA polymerase beta chain family. In terms of assembly, the RNAP catalytic core consists of 2 alpha, 1 beta, 1 beta' and 1 omega subunit. When a sigma factor is associated with the core the holoenzyme is formed, which can initiate transcription.

The enzyme catalyses RNA(n) + a ribonucleoside 5'-triphosphate = RNA(n+1) + diphosphate. In terms of biological role, DNA-dependent RNA polymerase catalyzes the transcription of DNA into RNA using the four ribonucleoside triphosphates as substrates. The polypeptide is DNA-directed RNA polymerase subunit beta (Nitratidesulfovibrio vulgaris (strain DSM 19637 / Miyazaki F) (Desulfovibrio vulgaris)).